The sequence spans 2104 residues: Myosin type-2 heavy chain 2 (2104 aa).

The Myosin N-terminal SH3-like domain occupies 35 to 85 (DERTWIWIPDSKESFVKAWIVEDLGEKYRVKLERDGSERIVDGFDAEKVNP). The 679-residue stretch at 89–767 (DMVDDMAALT…VLGSLEDRRN (679 aa)) folds into the Myosin motor domain. Residue 182–189 (GESGAGKT) participates in ATP binding. Positions 646-660 (LSSLMHQLEATQPHF) are actin-binding. Residues 829–2104 (LGTTQTDEYL…RSNRSPSVLR (1276 aa)) adopt a coiled-coil conformation. 2 disordered regions span residues 1245 to 1278 (NRSVTQHTLDGNSPHPSFEEKHSGDPLKRIDGNN) and 1398 to 1426 (MEFTGLKPLSPSKISNLPSSQPGSPSKRS). A compositionally biased stretch (polar residues) spans 1246–1259 (RSVTQHTLDGNSPH). Basic and acidic residues predominate over residues 1261 to 1278 (SFEEKHSGDPLKRIDGNN). The span at 1409–1424 (SKISNLPSSQPGSPSK) shows a compositional bias: polar residues. Ser-1421 carries the post-translational modification Phosphoserine.

This sequence belongs to the TRAFAC class myosin-kinesin ATPase superfamily. Myosin family. Binds to cdc4 and rlc1.

In terms of biological role, stabilizes the F-actin cables forming the F-actin ring that surrounds the nucleus during interphase. May work in conjunction with myo2. The polypeptide is Myosin type-2 heavy chain 2 (myo3) (Schizosaccharomyces pombe (strain 972 / ATCC 24843) (Fission yeast)).